Reading from the N-terminus, the 442-residue chain is MHLAVVGLSHRTAPVEVRERLSIPEHHLETSLQSLRSHEQVLETSILSTCNRLEIYSLLRHPEDGVEAIRDFLANHSGLADPDLQPHLFALHHEEAIQHLLRVSAGLDSLVLGEGQILSQVKKMYRLGQDHKSIGPILNRLLNQAVSTGKRVRSETNLGSGAVSISSAAVELAQLKVGQEQGVDDLVSLSQEKVAVVGAGRMARLLLQHLQSKGARSITVVNRTVAKAEVLAKDFPDLVITCCGLDQLDAQLASNTLLFTSTGADEPIIDRQRLDAITRQARLMLVDIGVPRNISSDAADVSGTLSYDVDDLQEVVERNVAARQQLAQQAEVLLDEDRQAFLDWWDGLEAVPTINRMRQQFEEIRKQELLKALSRMGSDFSQREKQVVEALTKGLINKILHGPTTALRAPQPRQQRLDSMAAAQRLFDLPGDDADRDRSDAK.

Residues 49 to 52 (TCNR), S109, 114 to 116 (EGQ), and Q120 each bind substrate. C50 serves as the catalytic Nucleophile. 198–203 (GAGRMA) serves as a coordination point for NADP(+). Positions 420–442 (MAAAQRLFDLPGDDADRDRSDAK) are disordered. Residues 433–442 (DADRDRSDAK) are compositionally biased toward basic and acidic residues.

Belongs to the glutamyl-tRNA reductase family. Homodimer.

The enzyme catalyses (S)-4-amino-5-oxopentanoate + tRNA(Glu) + NADP(+) = L-glutamyl-tRNA(Glu) + NADPH + H(+). It functions in the pathway porphyrin-containing compound metabolism; protoporphyrin-IX biosynthesis; 5-aminolevulinate from L-glutamyl-tRNA(Glu): step 1/2. Its pathway is porphyrin-containing compound metabolism; chlorophyll biosynthesis. Functionally, catalyzes the NADPH-dependent reduction of glutamyl-tRNA(Glu) to glutamate 1-semialdehyde (GSA). The protein is Glutamyl-tRNA reductase of Synechococcus sp. (strain RCC307).